Here is a 671-residue protein sequence, read N- to C-terminus: APC membrane recruitment protein 2 (671 aa).

Disordered regions lie at residues methionine 1–glycine 24, serine 76–serine 358, glutamate 391–glycine 414, and serine 444–threonine 598. Composition is skewed to gly residues over residues arginine 7–alanine 21 and glycine 126–proline 137. Serine 162 carries the phosphoserine modification. Basic and acidic residues predominate over residues glycine 171–aspartate 182. 2 positions are modified to phosphoserine: serine 229 and serine 233. Composition is skewed to basic and acidic residues over residues cysteine 236–alanine 260, alanine 276–glycine 286, and alanine 295–glutamate 307. Low complexity predominate over residues alanine 342–proline 353. A phosphoserine mark is found at serine 355 and serine 358. Residues glutamate 447–alanine 458 show a composition bias toward low complexity. Composition is skewed to basic and acidic residues over residues threonine 472–serine 487 and isoleucine 498–glutamine 514.

It belongs to the Amer family. Interacts with APC.

Its subcellular location is the cell membrane. Negative regulator of the canonical Wnt signaling pathway involved in neuroectodermal patterning. Acts by specifically binding phosphatidylinositol 4,5-bisphosphate (PtdIns(4,5)P2), translocating to the cell membrane and interacting with key regulators of the canonical Wnt signaling pathway, such as components of the beta-catenin destruction complex. In Homo sapiens (Human), this protein is APC membrane recruitment protein 2 (AMER2).